The following is a 334-amino-acid chain: Thiamine-binding periplasmic protein (334 aa).

Positions 1-23 (MRLLSLLTFSLFAVIGLAPAAQA) are cleaved as a signal peptide. Thiamine contacts are provided by residues 64 to 65 (DG), 166 to 167 (AT), tryptophan 202, and 220 to 223 (YTTS).

The protein belongs to the bacterial solute-binding protein 1 family. In terms of assembly, the complex is composed of two ATP-binding proteins (ThiQ), two transmembrane proteins (ThiP) and a solute-binding protein (ThiB).

Its subcellular location is the periplasm. Functionally, part of the ABC transporter complex ThiBPQ involved in thiamine import. This Brucella suis biovar 1 (strain 1330) protein is Thiamine-binding periplasmic protein (thiB).